We begin with the raw amino-acid sequence, 465 residues long: MSDQPPAENADVRQRRAPESPVTERLRAPARDDARPTSDESDMEGILQDEDSDAGSKNKEEKLERLTQAIPQDKGSLGVFADSMLEALPPRWRNWVVRGLFSIIMISTFTFIVTRGATWLMFLVFLIQFKCFQEIISIGLAVYRLYDFPWFRALSWYFLLTSNYFFFGESLIDYWGIVLKKDNFLHFLVAYHRLVSFALYCIGFVSFVLSLRKGYYMRQFSLFAWTHLTLLLIVSQSFFIIQNIFQGLIWFLAPVAMIICCDIMSYMFGFFWGKTPLIKLSPKKTWEGFIGGAFSTVVFGILLSLALYNRPFFVCPVQHYQTDSSNCTIPLAFQLQDYPVPRPFSFVYKILRKEPIIQLCPFVFHSIALSLFASILGPFGGFFASGFKRAFKIKDFGDVIPGHGGLMDRFDCQLLMGTFVMVYIHSFIRVPDASKLLKQIMTLEPQDQLNIFNLLQSELSKTGLI.

The disordered stretch occupies residues 1–60 (MSDQPPAENADVRQRRAPESPVTERLRAPARDDARPTSDESDMEGILQDEDSDAGSKNKE). Over residues 10–38 (ADVRQRRAPESPVTERLRAPARDDARPTS) the composition is skewed to basic and acidic residues. Over residues 39 to 53 (DESDMEGILQDEDSD) the composition is skewed to acidic residues. A run of 8 helical transmembrane segments spans residues 95–117 (WVVR…TRGA), 121–143 (MFLV…LAVY), 158–178 (FLLT…WGIV), 187–207 (FLVA…FVSF), 214–234 (GYYM…LLIV), 239–259 (FIIQ…AMII), 288–308 (GFIG…LALY), and 367–387 (IALS…ASGF).

It belongs to the CDS family.

It localises to the membrane. It catalyses the reaction a 1,2-diacyl-sn-glycero-3-phosphate + CTP + H(+) = a CDP-1,2-diacyl-sn-glycerol + diphosphate. Its pathway is phospholipid metabolism; CDP-diacylglycerol biosynthesis; CDP-diacylglycerol from sn-glycerol 3-phosphate: step 3/3. In terms of biological role, provides CDP-diacylglycerol, an important precursor for the synthesis of phosphatidylinositol (PtdIns). In Caenorhabditis elegans, this protein is Phosphatidate cytidylyltransferase (cdgs-1).